A 419-amino-acid polypeptide reads, in one-letter code: MYHPNYNYPPPQPGWGGGYYPPPQQHQQQQQWSPPPPQPYYSNGYPPPSQSPHSYSPPQYPPHGQYEYGHHTPTPPPSSGSQYRSYHSHSPSWGQMPPRPPMEAQQFGKGAPSNYRFQYSACTGRRKALLIGINYAGQPNALRGCINDVTNMSTFLHERYGYRREDMVILTDDQQNPMSVPTKANILRAMQWLVKDAQRNDSLFIHFSGHGGRTPDLDGDEEDGYDDVIYPVDYRTAGHIVDDDMHAIMVRPLQPGVRLTAIFDSCHSGTALDLPYVYSTQGILKEPNLAKEAAQDLFSAITSYGQGDFASVAQTAIGFLKKAALGESARERTVKTKTSPADVVMFSGSKDTQTSADTFQDGQARGALSWAFIKTLQARPNQSYLQLLNSIRSELEGKYSQKPQLSCSHPLDTNLLFVM.

The interval 1-109 (MYHPNYNYPP…PPMEAQQFGK (109 aa)) is disordered. Residues 33–50 (SPPPPQPYYSNGYPPPSQ) are compositionally biased toward pro residues. A compositionally biased stretch (low complexity) spans 51 to 66 (SPHSYSPPQYPPHGQY). A compositionally biased stretch (polar residues) spans 82–93 (QYRSYHSHSPSW). Catalysis depends on residues histidine 210 and cysteine 266.

This sequence belongs to the peptidase C14B family.

Its function is as follows. Involved in cell death (apoptosis). This is Metacaspase-1B (casB) from Aspergillus oryzae (strain ATCC 42149 / RIB 40) (Yellow koji mold).